Consider the following 165-residue polypeptide: Nutritionally-regulated adipose and cardiac-enriched protein (165 aa).

The disordered stretch occupies residues 1–47 (MRSAARVSRSNSHPRTRHPTRENEGTTWGSQPSRTERDGDRKCPPSI). The span at 34 to 43 (RTERDGDRKC) shows a compositional bias: basic and acidic residues. Residues 112 to 132 (GSLFLWLTLCALLGVVLVLYC) traverse the membrane as a helical segment.

Predominantly expressed in white adipose tissue (at protein level) and brown adipose tissue. Also detected in heart.

Its subcellular location is the cell membrane. This Mus musculus (Mouse) protein is Nutritionally-regulated adipose and cardiac-enriched protein (Nrac).